A 403-amino-acid chain; its full sequence is MSKLSIKDLQLSNKRVFMRVDFNVPLDENGRVTDDTRIRETLPTIEYALRHGAKLILCSHLGRPKGKPNPKMSLKPVAERLRVMLDHAISPGQNVGFSPDCIGMQAQEMAKQLEKGQALLLENVRFHAEEEKNDPAFAKELASLCELYVNDAFGSAHRAHASTEGITHYVEKSAAGLLMQKELDYLGKATSNPAKPFVAILGGAKVSDKIGVIQNLMAKVDAIIIGGGMAYTFLKAQGQEIGKSLFEADKLDLAKQILADAHKRGLKFLLPVDHVTADKFDMHATPHQIGEGQSIPAEQMALDIGPKTVALFSEEIAKARTIVWNGPMGVFEFDNFAKGTRAIAKAVAGNSGATSIVGGGDSVAAVHDAGVADKITHISTGGGASLEFLEGKKLPGVEALTNK.

Substrate is bound by residues 21-23, R37, 60-63, R125, and R158; these read DFN and HLGR. ATP is bound by residues K209, E332, and 359–362; that span reads GGDS.

This sequence belongs to the phosphoglycerate kinase family. As to quaternary structure, monomer.

It is found in the cytoplasm. It carries out the reaction (2R)-3-phosphoglycerate + ATP = (2R)-3-phospho-glyceroyl phosphate + ADP. Its pathway is carbohydrate degradation; glycolysis; pyruvate from D-glyceraldehyde 3-phosphate: step 2/5. In Koribacter versatilis (strain Ellin345), this protein is Phosphoglycerate kinase.